The sequence spans 43 residues: uncharacterized protein (43 aa).

The signal sequence occupies residues 1–22 (MKRKIIAIGIFFRLFIIHIHFS).

This is an uncharacterized protein from Schizosaccharomyces pombe (strain 972 / ATCC 24843) (Fission yeast).